Reading from the N-terminus, the 173-residue chain is NADH-ubiquinone oxidoreductase chain 6 (173 aa).

The next 5 membrane-spanning stretches (helical) occupy residues 1-21 (MTYL…AVAS), 27-47 (YGVV…LSLG), 48-68 (VSFV…VVFV), 88-108 (VGYG…GGLI), and 139-159 (YGVG…FVVL).

It belongs to the complex I subunit 6 family.

It localises to the mitochondrion membrane. It catalyses the reaction a ubiquinone + NADH + 5 H(+)(in) = a ubiquinol + NAD(+) + 4 H(+)(out). Its function is as follows. Core subunit of the mitochondrial membrane respiratory chain NADH dehydrogenase (Complex I) that is believed to belong to the minimal assembly required for catalysis. Complex I functions in the transfer of electrons from NADH to the respiratory chain. The immediate electron acceptor for the enzyme is believed to be ubiquinone. This is NADH-ubiquinone oxidoreductase chain 6 (MT-ND6) from Calidris maritima (Purple sandpiper).